The primary structure comprises 740 residues: UvrABC system protein B (740 aa).

A disordered region spans residues 1-36 (MTIAIRTTLDEPENHSDFVPHRPSRPEKTEPSKPFR). Residues 8-33 (TLDEPENHSDFVPHRPSRPEKTEPSK) are compositionally biased toward basic and acidic residues. The 389-residue stretch at 56-444 (KDIQKGERDQ…GGVFVEQIIR (389 aa)) folds into the Helicase ATP-binding domain. 69 to 76 (GVTGSGKT) lines the ATP pocket. The Beta-hairpin signature appears at 122-145 (YYDYYQPEAYVPRTDTYIEKDSAI). Residues 461–627 (QVDNLIFEAK…TVKRQVDDIV (167 aa)) enclose the Helicase C-terminal domain. The region spanning 651-686 (ARSISETEKEMLEAAANLEFEKAAQLRDVLHQLKRQ) is the UVR domain. The interval 687 to 740 (ELGLPPEKSSEIQGRSEAGRPGTRKTRSDKAREAKASKRVKQEAGEKLLRSRGH) is disordered. Residues 712-740 (TRSDKAREAKASKRVKQEAGEKLLRSRGH) show a composition bias toward basic and acidic residues.

The protein belongs to the UvrB family. Forms a heterotetramer with UvrA during the search for lesions. Interacts with UvrC in an incision complex.

It is found in the cytoplasm. Functionally, the UvrABC repair system catalyzes the recognition and processing of DNA lesions. A damage recognition complex composed of 2 UvrA and 2 UvrB subunits scans DNA for abnormalities. Upon binding of the UvrA(2)B(2) complex to a putative damaged site, the DNA wraps around one UvrB monomer. DNA wrap is dependent on ATP binding by UvrB and probably causes local melting of the DNA helix, facilitating insertion of UvrB beta-hairpin between the DNA strands. Then UvrB probes one DNA strand for the presence of a lesion. If a lesion is found the UvrA subunits dissociate and the UvrB-DNA preincision complex is formed. This complex is subsequently bound by UvrC and the second UvrB is released. If no lesion is found, the DNA wraps around the other UvrB subunit that will check the other stand for damage. The protein is UvrABC system protein B of Zymomonas mobilis subsp. mobilis (strain ATCC 31821 / ZM4 / CP4).